A 253-amino-acid chain; its full sequence is Ribonuclease HII (253 aa).

One can recognise an RNase H type-2 domain in the interval 30–221 (GPVAGVDEVG…VRRLVVDGEP (192 aa)). A divalent metal cation-binding residues include aspartate 36, glutamate 37, and aspartate 130.

Belongs to the RNase HII family. The cofactor is Mn(2+). Mg(2+) is required as a cofactor.

The protein localises to the cytoplasm. It carries out the reaction Endonucleolytic cleavage to 5'-phosphomonoester.. Endonuclease that specifically degrades the RNA of RNA-DNA hybrids. The polypeptide is Ribonuclease HII (Mycolicibacterium gilvum (strain PYR-GCK) (Mycobacterium gilvum (strain PYR-GCK))).